Consider the following 122-residue polypeptide: Ribonuclease P protein component (122 aa).

Belongs to the RnpA family. In terms of assembly, consists of a catalytic RNA component (M1 or rnpB) and a protein subunit.

The catalysed reaction is Endonucleolytic cleavage of RNA, removing 5'-extranucleotides from tRNA precursor.. RNaseP catalyzes the removal of the 5'-leader sequence from pre-tRNA to produce the mature 5'-terminus. It can also cleave other RNA substrates such as 4.5S RNA. The protein component plays an auxiliary but essential role in vivo by binding to the 5'-leader sequence and broadening the substrate specificity of the ribozyme. This is Ribonuclease P protein component from Synechococcus elongatus (strain ATCC 33912 / PCC 7942 / FACHB-805) (Anacystis nidulans R2).